The chain runs to 886 residues: Leucine--tRNA ligase (886 aa).

The 'HIGH' region signature appears at 46-56 (PYPSGKLHMGH). Residues 638–642 (TMSKS) carry the 'KMSKS' region motif. ATP is bound at residue Lys-641.

This sequence belongs to the class-I aminoacyl-tRNA synthetase family.

The protein resides in the cytoplasm. It carries out the reaction tRNA(Leu) + L-leucine + ATP = L-leucyl-tRNA(Leu) + AMP + diphosphate. The polypeptide is Leucine--tRNA ligase (Polaromonas sp. (strain JS666 / ATCC BAA-500)).